A 209-amino-acid polypeptide reads, in one-letter code: Phosphoheptose isomerase (209 aa).

An SIS domain is found at 50 to 209 (IADTFREGGK…ELVEKMMGYD (160 aa)). 65-67 (NGG) contacts substrate. Zn(2+)-binding residues include histidine 74 and glutamate 78. Substrate-binding positions include glutamate 78, 109–110 (ND), 135–137 (STS), serine 140, and glutamine 188. Glutamine 188 and histidine 196 together coordinate Zn(2+).

The protein belongs to the SIS family. GmhA subfamily. Zn(2+) serves as cofactor.

Its subcellular location is the cytoplasm. It catalyses the reaction 2 D-sedoheptulose 7-phosphate = D-glycero-alpha-D-manno-heptose 7-phosphate + D-glycero-beta-D-manno-heptose 7-phosphate. Its pathway is carbohydrate biosynthesis; D-glycero-D-manno-heptose 7-phosphate biosynthesis; D-glycero-alpha-D-manno-heptose 7-phosphate and D-glycero-beta-D-manno-heptose 7-phosphate from sedoheptulose 7-phosphate: step 1/1. Its function is as follows. Catalyzes the isomerization of sedoheptulose 7-phosphate in D-glycero-D-manno-heptose 7-phosphate. The protein is Phosphoheptose isomerase of Chlorobaculum tepidum (strain ATCC 49652 / DSM 12025 / NBRC 103806 / TLS) (Chlorobium tepidum).